Consider the following 24-residue polypeptide: Brevinin-1SPa (24 aa).

A disulfide bridge links C18 with C24.

As to expression, expressed by the skin glands.

Its subcellular location is the secreted. Antimicrobial peptide with activity against Gram-negative and Gram-positive bacteria (MIC=13 uM against E.coli, MIC=3 uM against S.aureus) and fungi (MIC=6 uM against C.albicans). Shows hemolytic activity on human erythrocytes (HC(50)=7 uM). The sequence is that of Brevinin-1SPa from Lithobates septentrionalis (Mink frog).